Consider the following 139-residue polypeptide: MENKVINFKKIIDSRGSLVAIEENKNIPFSIKRVYYIFDTKGEEPRGFHAHKKLEQVLVCLNGSCRVILDDGNIIQEITLDSPAVGLYVGPAVWHEMHDFSSDCVMMVLASDYYDETDYIRQYDNFKKYIAKINLEKEG.

Histidine 49 (proton acceptor) is an active-site residue.

In terms of assembly, homodimer.

It catalyses the reaction dTDP-4-dehydro-6-deoxy-alpha-D-glucose = dTDP-3-dehydro-6-deoxy-alpha-D-galactose. Functionally, mediates the isomerization of dTDP-6-deoxy-D-xylohex-4-ulose into dTDP-6-deoxy-D-xylohex-3-ulose in the biosynthesis of dTDP-3-acetamido-3,6-dideoxy-alpha-D-galactose, a glycan chain of the S-layer. This chain is TDP-4-oxo-6-deoxy-alpha-D-glucose-3,4-oxoisomerase (fdtA), found in Aneurinibacillus thermoaerophilus.